Reading from the N-terminus, the 239-residue chain is Non-classical arabinogalactan protein 30 (239 aa).

The N-terminal stretch at Met1–Thr24 is a signal peptide. A glycan (N-linked (GlcNAc...) asparagine) is linked at Asn106.

It belongs to the non-classical AGP family. In terms of tissue distribution, specifically expressed in root tips.

The protein resides in the secreted. Its subcellular location is the cell wall. In terms of biological role, proteoglycan required for the timing of seed germination. May function in the abscisic acid (ABA) response. This is Non-classical arabinogalactan protein 30 from Arabidopsis thaliana (Mouse-ear cress).